Reading from the N-terminus, the 145-residue chain is MKFNPFVTSDRSKNRKRHFNAPSHIRRKIMSSPLSKELRQKYNVRSMPIRKDDEVQVVRGHYKGQQIGKVVQVYRKKYVIYIERVQREKANGTTVHVGIHPSKVVITRLKLDKDRKKILERKAKSRQVGKEKGKYKEETIEKMQE.

Disordered regions lie at residues 1–21 (MKFN…HFNA) and 122–145 (KAKS…KMQE). K136 participates in a covalent cross-link: Glycyl lysine isopeptide (Lys-Gly) (interchain with G-Cter in SUMO2). T139 is subject to Phosphothreonine.

It belongs to the universal ribosomal protein uL24 family. Component of the large ribosomal subunit. Interacts with DHX33. In terms of processing, ufmylated by UFL1 in response to endoplasmic reticulum stress, promoting reticulophagy of endoplasmic reticulum sheets.

It is found in the cytoplasm. Functionally, component of the large ribosomal subunit. The ribosome is a large ribonucleoprotein complex responsible for the synthesis of proteins in the cell. This Bos taurus (Bovine) protein is Large ribosomal subunit protein uL24 (RPL26).